The chain runs to 276 residues: Checkpoint protein HUS1B (276 aa).

It belongs to the HUS1 family. As to quaternary structure, interacts with RAD1 and RAD9B.

This chain is Checkpoint protein HUS1B (Hus1b), found in Mus musculus (Mouse).